The chain runs to 136 residues: UPF0213 protein AHA_3736 (136 aa).

Residues 17–92 (SHWFIYMVRT…KQQSKAFKEQ (76 aa)) enclose the GIY-YIG domain. The disordered stretch occupies residues 114-136 (QKRPRYAAAKEGSDNRECQRQVD). The span at 124 to 136 (EGSDNRECQRQVD) shows a compositional bias: basic and acidic residues.

Belongs to the UPF0213 family.

The protein is UPF0213 protein AHA_3736 of Aeromonas hydrophila subsp. hydrophila (strain ATCC 7966 / DSM 30187 / BCRC 13018 / CCUG 14551 / JCM 1027 / KCTC 2358 / NCIMB 9240 / NCTC 8049).